A 265-amino-acid polypeptide reads, in one-letter code: Proteasome subunit alpha (265 aa).

A disordered region spans residues 236–265; the sequence is EKDSKGSKGAQNPKGARDSKNSKSYGESTD.

This sequence belongs to the peptidase T1A family. In terms of assembly, the 20S proteasome core is composed of 14 alpha and 14 beta subunits that assemble into four stacked heptameric rings, resulting in a barrel-shaped structure. The two inner rings, each composed of seven catalytic beta subunits, are sandwiched by two outer rings, each composed of seven alpha subunits. The catalytic chamber with the active sites is on the inside of the barrel. Has a gated structure, the ends of the cylinder being occluded by the N-termini of the alpha-subunits. Is capped by the proteasome-associated ATPase, ARC.

The protein localises to the cytoplasm. It functions in the pathway protein degradation; proteasomal Pup-dependent pathway. Its activity is regulated as follows. The formation of the proteasomal ATPase ARC-20S proteasome complex, likely via the docking of the C-termini of ARC into the intersubunit pockets in the alpha-rings, may trigger opening of the gate for substrate entry. Interconversion between the open-gate and close-gate conformations leads to a dynamic regulation of the 20S proteasome proteolysis activity. In terms of biological role, component of the proteasome core, a large protease complex with broad specificity involved in protein degradation. The polypeptide is Proteasome subunit alpha (Mycobacterium leprae (strain Br4923)).